A 182-amino-acid polypeptide reads, in one-letter code: Large ribosomal subunit protein uL6 (182 aa).

It belongs to the universal ribosomal protein uL6 family. Part of the 50S ribosomal subunit.

In terms of biological role, this protein binds to the 23S rRNA, and is important in its secondary structure. It is located near the subunit interface in the base of the L7/L12 stalk, and near the tRNA binding site of the peptidyltransferase center. This chain is Large ribosomal subunit protein uL6, found in Caldicellulosiruptor bescii (strain ATCC BAA-1888 / DSM 6725 / KCTC 15123 / Z-1320) (Anaerocellum thermophilum).